The chain runs to 886 residues: MSAAKEGKEKKPVATVVKIVEVESVSPSKDKRPTRMKLLNNLSASSPQTYPPKTDKRSGIKGSRIKILNEDVLVAPKVEKRRSTKPTSPGATATSTVKILNEKRIVPAEETALETTKIKISPPKRNKMDHYVLQPVKVENNKSASQATRGATGEDEDTIAFILGDDDEVVPASTSRSNGQEILVTEEEEEEEEDDLDEEGDSPGGSNKNSGHKAIKEIVEHVCGKCYKTFRRLMSLKKHLEFCRYDSGYHLRKAECWKNLEKIEKDGDVLEKKDICFCCCESYDTFHLGHINCPDCPKSFKTQTSYERHIFITHSEFSDYPCSICNANLRSEALLKLHEEQHKSRGKPYACKICGKDFTRSYHLKRHQKYSSCSANENDTMSCKVCDRVFYRLDNLRSHLKHHLGTQVVKKPEYMCHVCKNCFYSLSTLNIHIRTHTGEKPFDCDLCDKKLSALVALKKHRRYHTGEKPYSCTVCNQAFAVKEVLNRHMKRHTGERPHKCEECGKSFIQATQLRTHSKTHIRPFACDMCEEKFKTEKQLERHVKEHSRQKRPYFSCTECKRHFRNTAQLKQHMDAGDHSEKSGEKPQRAKRSSTKVLERTDCAICDKNFDSSETLRKHIRSVHECDPDDIFGIQPPSAKRAKINKIPKVDEEEEEEMVPVALNASSGSLISSQTDDNGVVVREFLVDEGDGTAQTITLENETYTILPLDGEIAAEQITDEGVKVEGQKTPPKKSPVVKKEKRKSLGASLAAAIADNIEVPPVEEDFEGEVLTEEDLKLKENIAKLIDMLADPPILKKYGWPNAPEEMVLCKVIENCGYDLNKGAENYAELDYGSRMREYCKLLFTVVIHNDSIKSLLNNFPIDDVIEYVLGDEDQDEDGADNGEGN.

Disordered regions lie at residues 24-62 (SVSP…GIKG) and 167-211 (DEVV…KNSG). A compositionally biased stretch (acidic residues) spans 184 to 201 (VTEEEEEEEEDDLDEEGD). Residues 221-243 (HVCGKCYKTFRRLMSLKKHLEFC) form a C2H2-type 1; atypical zinc finger. The C2H2-type 2 zinc-finger motif lies at 291–314 (INCPDCPKSFKTQTSYERHIFITH). The C2H2-type 3; atypical zinc-finger motif lies at 320 to 342 (YPCSICNANLRSEALLKLHEEQH). 9 consecutive C2H2-type zinc fingers follow at residues 349–367 (YACK…LKRH), 381–403 (MSCK…LKHH), 414–436 (YMCH…IRTH), 442–464 (FDCD…RRYH), 470–492 (YSCT…MKRH), 498–520 (HKCE…SKTH), 524–546 (FACD…VKEH), 554–578 (FSCT…AGDH), and 600–623 (TDCA…RSVH). The span at 571 to 587 (QHMDAGDHSEKSGEKPQ) shows a compositional bias: basic and acidic residues. The interval 571–594 (QHMDAGDHSEKSGEKPQRAKRSST) is disordered.

The protein resides in the nucleus. Functionally, component of the gypsy chromatin insulator complex which is required for the function of the gypsy chromatin insulator and other endogenous chromatin insulators. Chromatin insulators are regulatory elements which establish independent domains of transcriptional activity within eukaryotic genomes. Insulators have two defining properties; they can block the communication between an enhancer and a promoter when placed between them and can also buffer transgenes from position effect variegation (PEV). Insulators are proposed to structure the chromatin fiber into independent domains of differing transcriptional potential by promoting the formation of distinct chromatin loops. This chromatin looping may involve the formation of insulator bodies, where homotypic interactions between individual subunits of the insulator complex could promote the clustering of widely spaced insulators at the nuclear periphery. Within the gypsy insulator complex, this protein binds specifically to a region of the gypsy element located 3' of the 5' long terminal repeat (LTR), and may also mediate interaction with other endogenous insulators at sites distinct from those recognized by Cp190. Cooperates with pita and cliff to recruit Cp190 and regulate insulator function at the front-ultraabdominal (Fub) boundary. The chain is Protein suppressor of hairy wing (su(Hw)) from Drosophila ananassae (Fruit fly).